Reading from the N-terminus, the 1402-residue chain is DNA-directed RNA polymerase subunit beta' (1402 aa).

Zn(2+) is bound by residues C73, C75, C88, and C91. D464, D466, and D468 together coordinate Mg(2+). Residues C812, C886, C893, and C896 each contribute to the Zn(2+) site.

Belongs to the RNA polymerase beta' chain family. As to quaternary structure, the RNAP catalytic core consists of 2 alpha, 1 beta, 1 beta' and 1 omega subunit. When a sigma factor is associated with the core the holoenzyme is formed, which can initiate transcription. Mg(2+) is required as a cofactor. Requires Zn(2+) as cofactor.

The catalysed reaction is RNA(n) + a ribonucleoside 5'-triphosphate = RNA(n+1) + diphosphate. In terms of biological role, DNA-dependent RNA polymerase catalyzes the transcription of DNA into RNA using the four ribonucleoside triphosphates as substrates. The polypeptide is DNA-directed RNA polymerase subunit beta' (Rhodopseudomonas palustris (strain ATCC BAA-98 / CGA009)).